The primary structure comprises 145 residues: Large ribosomal subunit protein uL15 (145 aa).

Residues 1–50 (MRLNTLSPAAGSKPEKQRRGRGIGSGLGKTGGRGVKGQTSRSGGGKVRAG) form a disordered region. A compositionally biased stretch (gly residues) spans 22–35 (GIGSGLGKTGGRGV).

This sequence belongs to the universal ribosomal protein uL15 family. In terms of assembly, part of the 50S ribosomal subunit.

Binds to the 23S rRNA. This Aeromonas salmonicida (strain A449) protein is Large ribosomal subunit protein uL15.